We begin with the raw amino-acid sequence, 192 residues long: Peptide deformylase (192 aa).

The Fe cation site is built by cysteine 102 and histidine 145. Glutamate 146 is an active-site residue. Residue histidine 149 coordinates Fe cation.

This sequence belongs to the polypeptide deformylase family. The cofactor is Fe(2+).

It catalyses the reaction N-terminal N-formyl-L-methionyl-[peptide] + H2O = N-terminal L-methionyl-[peptide] + formate. Functionally, removes the formyl group from the N-terminal Met of newly synthesized proteins. Requires at least a dipeptide for an efficient rate of reaction. N-terminal L-methionine is a prerequisite for activity but the enzyme has broad specificity at other positions. The protein is Peptide deformylase of Thermus thermophilus (strain ATCC BAA-163 / DSM 7039 / HB27).